A 62-amino-acid polypeptide reads, in one-letter code: MTIAFQLAVFALIATSSILLISVPVVFASPDGWSSNKNVVFSGTSLWIALVFLVGILNSLIS.

Helical transmembrane passes span 8-28 (AVFALIATSSILLISVPVVFA) and 41-61 (FSGTSLWIALVFLVGILNSLI).

Belongs to the PsbZ family. PSII is composed of 1 copy each of membrane proteins PsbA, PsbB, PsbC, PsbD, PsbE, PsbF, PsbH, PsbI, PsbJ, PsbK, PsbL, PsbM, PsbT, PsbY, PsbZ, Psb30/Ycf12, at least 3 peripheral proteins of the oxygen-evolving complex and a large number of cofactors. It forms dimeric complexes.

It localises to the plastid. The protein localises to the chloroplast thylakoid membrane. Functionally, may control the interaction of photosystem II (PSII) cores with the light-harvesting antenna, regulates electron flow through the 2 photosystem reaction centers. PSII is a light-driven water plastoquinone oxidoreductase, using light energy to abstract electrons from H(2)O, generating a proton gradient subsequently used for ATP formation. The chain is Photosystem II reaction center protein Z from Lotus japonicus (Lotus corniculatus var. japonicus).